The sequence spans 205 residues: Deoxyuridine 5'-triphosphate nucleotidohydrolase (205 aa).

Serine 54 is modified (phosphoserine). Residues 126–128 (RSG), 140–143 (GVID), glycine 151, and 199–200 (FG) each bind substrate.

It belongs to the dUTPase family. As to quaternary structure, homotrimer. It depends on Mg(2+) as a cofactor. As to expression, expressed in all tissues examined. Higher levels in heart and kidney.

The protein resides in the cytoplasm. It localises to the nucleus. The enzyme catalyses dUTP + H2O = dUMP + diphosphate + H(+). Its pathway is pyrimidine metabolism; dUMP biosynthesis; dUMP from dCTP (dUTP route): step 2/2. Functionally, catalyzes the cleavage of 2'-deoxyuridine 5'-triphosphate (dUTP) into 2'-deoxyuridine 5'-monophosphate (dUMP) and inorganic pyrophosphate and through its action efficiently prevents uracil misincorporation into DNA and at the same time provides dUMP, the substrate for de novo thymidylate biosynthesis. Inhibits peroxisome proliferator-activated receptor (PPAR) activity by binding of its N-terminal to PPAR, preventing the latter's dimerization with retinoid X receptor. Essential for embryonic development. The polypeptide is Deoxyuridine 5'-triphosphate nucleotidohydrolase (Dut) (Rattus norvegicus (Rat)).